A 517-amino-acid chain; its full sequence is L-amino-acid oxidase (517 aa).

The N-terminal stretch at 1–18 is a signal peptide; it reads MNVFFMFSLLFLAALESC. A disulfide bridge connects residues cysteine 29 and cysteine 192. FAD is bound by residues 62 to 63, 82 to 83, arginine 90, and 106 to 109; these read MA, EA, and GPMR. A substrate-binding site is contributed by arginine 109. Residue asparagine 191 is glycosylated (N-linked (GlcNAc...) asparagine). Residue valine 280 coordinates FAD. Cysteine 350 and cysteine 431 are joined by a disulfide. Residue tyrosine 391 coordinates substrate. Residues glutamate 476 and 483–488 each bind FAD; that span reads GWIDST. Substrate is bound at residue 483–484; it reads GW.

It belongs to the flavin monoamine oxidase family. FIG1 subfamily. As to quaternary structure, homodimer; non-covalently linked. The cofactor is FAD. N-glycosylated. Expressed by the venom gland.

The protein localises to the secreted. The enzyme catalyses an L-alpha-amino acid + O2 + H2O = a 2-oxocarboxylate + H2O2 + NH4(+). Its function is as follows. Catalyzes an oxidative deamination of predominantly hydrophobic and aromatic L-amino acids, thus producing hydrogen peroxide that may contribute to the diverse toxic effects of this enzyme. Exhibits diverse biological activities, such as hemorrhage, hemolysis, edema, apoptosis of vascular endothelial cells or tumor cell lines, antibacterial and antiparasitic activities, as well as regulation of platelet aggregation. Its effect on platelets is controversial, since it either induces aggregation or inhibits agonist-induced aggregation. These different effects are probably due to different experimental conditions. In Demansia vestigiata (Lesser black whip snake), this protein is L-amino-acid oxidase.